Consider the following 127-residue polypeptide: Fluoride-specific ion channel FluC (127 aa).

3 helical membrane-spanning segments follow: residues 28 to 48 (LALF…SLAM), 73 to 93 (TGVL…ALLI), and 98 to 118 (VGLA…GLFL). The Na(+) site is built by Gly77 and Thr80.

This sequence belongs to the fluoride channel Fluc/FEX (TC 1.A.43) family.

It localises to the cell inner membrane. The catalysed reaction is fluoride(in) = fluoride(out). Its activity is regulated as follows. Na(+) is not transported, but it plays an essential structural role and its presence is essential for fluoride channel function. Functionally, fluoride-specific ion channel. Important for reducing fluoride concentration in the cell, thus reducing its toxicity. In Beijerinckia indica subsp. indica (strain ATCC 9039 / DSM 1715 / NCIMB 8712), this protein is Fluoride-specific ion channel FluC.